The sequence spans 350 residues: Magnesium-chelatase 38 kDa subunit (350 aa).

52–59 (GDRGTGKS) is a binding site for ATP.

It belongs to the Mg-chelatase subunits D/I family.

The enzyme catalyses protoporphyrin IX + Mg(2+) + ATP + H2O = Mg-protoporphyrin IX + ADP + phosphate + 3 H(+). It participates in porphyrin-containing compound metabolism; bacteriochlorophyll biosynthesis. Involved in bacteriochlorophyll biosynthesis; introduces a magnesium ion into protoporphyrin IX to yield Mg-protoporphyrin IX. This Rhodobacter capsulatus (strain ATCC BAA-309 / NBRC 16581 / SB1003) protein is Magnesium-chelatase 38 kDa subunit (bchI).